We begin with the raw amino-acid sequence, 121 residues long: Ragulator complex protein LAMTOR4 homolog (121 aa).

The segment at 91-121 (TQNGATTSSSSSTSYNDAAEGNNISSSTVLA) is disordered. The segment covering 112–121 (NNISSSTVLA) has biased composition (polar residues).

It belongs to the LAMTOR4 family. In terms of assembly, part of the Ragulator complex.

It is found in the lysosome. Its function is as follows. Regulator of the TOR pathway, a signaling cascade that promotes cell growth in response to growth factors, energy levels, and amino acids. As part of the Ragulator complex, may activate the TOR signaling cascade in response to amino acids. This Drosophila pseudoobscura pseudoobscura (Fruit fly) protein is Ragulator complex protein LAMTOR4 homolog.